The sequence spans 1181 residues: 1-phosphatidylinositol 4,5-bisphosphate phosphodiesterase beta-2 (1181 aa).

In terms of domain architecture, PI-PLC X-box spans 312-463 (QDMTQPLNHY…LRGKILIKNK (152 aa)). The active site involves histidine 327. Ca(2+) is bound by residues asparagine 328, glutamate 357, and aspartate 359. The active site involves histidine 374. Glutamate 408 serves as a coordination point for Ca(2+). Residues 465-534 (NQFSGPASPS…EEIKKMQSDE (70 aa)) form a disordered region. Acidic residues predominate over residues 503–525 (TEVEEEEVVEEEEEEESGNLDEE). The region spanning 547 to 663 (MSSLVNYIQP…GYLLKHEFMR (117 aa)) is the PI-PLC Y-box domain. A C2 domain is found at 666 to 791 (DKQFNPFSVD…CLRSESNMAL (126 aa)). The segment at 847-890 (SGTPVASQSNGAPVSAGNGSTAPGTKATGEEATKEVTEPQTASL) is disordered. Polar residues predominate over residues 850–869 (PVASQSNGAPVSAGNGSTAP). The span at 874–883 (TGEEATKEVT) shows a compositional bias: basic and acidic residues. The stretch at 893–940 (LRELKGVVKLQRRHEKELRELERRGARRWEELLQRGAAQLAELQTQAA) forms a coiled coil. Serine 950 bears the Phosphoserine mark. 2 coiled-coil regions span residues 974–1026 (PRVQ…AELK) and 1075–1141 (HIQE…VRAY). The interval 1149–1181 (EAEDKPERSCEASEESCPQEPLVSKADTQESRL) is disordered. Over residues 1150–1159 (AEDKPERSCE) the composition is skewed to basic and acidic residues.

Interacts with RAC1. Forms a complex composed of at least WDR26, a G-beta:gamma unit, and PLCB2. It depends on Ca(2+) as a cofactor.

The enzyme catalyses a 1,2-diacyl-sn-glycero-3-phospho-(1D-myo-inositol-4,5-bisphosphate) + H2O = 1D-myo-inositol 1,4,5-trisphosphate + a 1,2-diacyl-sn-glycerol + H(+). It carries out the reaction a 1,2-diacyl-sn-glycero-3-phospho-(1D-myo-inositol) + H2O = 1D-myo-inositol 1-phosphate + a 1,2-diacyl-sn-glycerol + H(+). The production of the second messenger molecules diacylglycerol (DAG) and inositol 1,4,5-trisphosphate (IP3) is mediated by activated phosphatidylinositol-specific phospholipase C enzymes. In neutrophils, participates in a phospholipase C-activating N-formyl peptide-activated GPCR (G protein-coupled receptor) signaling pathway by promoting RASGRP4 activation by DAG, to promote neutrophil functional responses. This Mus musculus (Mouse) protein is 1-phosphatidylinositol 4,5-bisphosphate phosphodiesterase beta-2.